Reading from the N-terminus, the 299-residue chain is tRNA dimethylallyltransferase (299 aa).

13–20 (GATASGKT) provides a ligand contact to ATP. 15 to 20 (TASGKT) contributes to the substrate binding site. The segment at 38–41 (DSRQ) is interaction with substrate tRNA.

The protein belongs to the IPP transferase family. Monomer. It depends on Mg(2+) as a cofactor.

The catalysed reaction is adenosine(37) in tRNA + dimethylallyl diphosphate = N(6)-dimethylallyladenosine(37) in tRNA + diphosphate. Functionally, catalyzes the transfer of a dimethylallyl group onto the adenine at position 37 in tRNAs that read codons beginning with uridine, leading to the formation of N6-(dimethylallyl)adenosine (i(6)A). The polypeptide is tRNA dimethylallyltransferase (Prochlorococcus marinus (strain MIT 9312)).